We begin with the raw amino-acid sequence, 471 residues long: 3-isopropylmalate dehydratase large subunit (471 aa).

[4Fe-4S] cluster contacts are provided by cysteine 347, cysteine 407, and cysteine 410.

It belongs to the aconitase/IPM isomerase family. LeuC type 1 subfamily. In terms of assembly, heterodimer of LeuC and LeuD. [4Fe-4S] cluster serves as cofactor.

The enzyme catalyses (2R,3S)-3-isopropylmalate = (2S)-2-isopropylmalate. The protein operates within amino-acid biosynthesis; L-leucine biosynthesis; L-leucine from 3-methyl-2-oxobutanoate: step 2/4. Catalyzes the isomerization between 2-isopropylmalate and 3-isopropylmalate, via the formation of 2-isopropylmaleate. In Buchnera aphidicola subsp. Baizongia pistaciae (strain Bp), this protein is 3-isopropylmalate dehydratase large subunit.